The following is a 172-amino-acid chain: Adenine phosphoribosyltransferase (172 aa).

It belongs to the purine/pyrimidine phosphoribosyltransferase family. As to quaternary structure, homodimer.

It localises to the cytoplasm. The enzyme catalyses AMP + diphosphate = 5-phospho-alpha-D-ribose 1-diphosphate + adenine. The protein operates within purine metabolism; AMP biosynthesis via salvage pathway; AMP from adenine: step 1/1. Functionally, catalyzes a salvage reaction resulting in the formation of AMP, that is energically less costly than de novo synthesis. In Lactiplantibacillus plantarum (strain ATCC BAA-793 / NCIMB 8826 / WCFS1) (Lactobacillus plantarum), this protein is Adenine phosphoribosyltransferase.